Consider the following 264-residue polypeptide: uncharacterized protein (264 aa).

8 helical membrane-spanning segments follow: residues 19–39, 42–62, 69–89, 100–120, 136–156, 160–180, 192–212, and 223–243; these read LFPA…LPFL, YDWL…SGLE, VITL…HMGS, IFGV…YLCQ, FAVV…HFSI, WWLS…YEVN, FILI…FGAW, and LVHL…FLIV.

It localises to the cell membrane. This is an uncharacterized protein from Bacillus subtilis (strain 168).